We begin with the raw amino-acid sequence, 336 residues long: Protein phosphatase 1 regulatory subunit pprA (336 aa).

The span at 1–10 (MSEQNTIINS) shows a compositional bias: low complexity. The disordered stretch occupies residues 1–24 (MSEQNTIINSEEIKENEKIESETE). Basic and acidic residues predominate over residues 11-21 (EEIKENEKIES). LRR repeat units lie at residues 26–47 (PITY…YNIP), 49–70 (TLLD…NHLK), 71–92 (NLKK…DQLK), 93–114 (ELES…KDFQ), 115–136 (SLTY…SIKD), 139–160 (KIKE…QELV), 161–182 (PIKN…ENLV), 183–204 (NIET…NHLS), 205–225 (HLRI…KGLV), 229–250 (CLEE…QSLK), 251–272 (QLRT…NELP), and 273–294 (DLDE…EQQV). Residues 306-336 (NPVATHVQYRRMFINMFPQLKQLDATMVKRN) enclose the LRRCT domain.

It belongs to the SDS22 family.

It is found in the nucleus. Regulatory subunit of protein phosphatase 1. This Dictyostelium discoideum (Social amoeba) protein is Protein phosphatase 1 regulatory subunit pprA (pprA).